Consider the following 379-residue polypeptide: GDP-mannose transporter 1 (379 aa).

Over 1–39 (MTDNRKPEDYTIEMDKLGQNKNYQAPPPPPQPRSSTASS) the chain is Cytoplasmic. The segment at 17–38 (LGQNKNYQAPPPPPQPRSSTAS) is disordered. The chain crosses the membrane as a helical span at residues 40-60 (ISNNAALSVLAYCGSSILMTV). The Lumenal portion of the chain corresponds to 61-69 (MNKYVLSSD). Residues 70–90 (FNLNFFLLCVQSLVCIIAIQL) form a helical membrane-spanning segment. At 91–110 (CKACGLITYRDFNLDEARKW) the chain is on the cytoplasmic side. The helical transmembrane segment at 111-133 (FPITLLLIGMIYTGSKALQFLSI) threads the bilayer. The Lumenal portion of the chain corresponds to 134-136 (PVY). A helical transmembrane segment spans residues 137–156 (TIFKNLTIILIAYGEVLWFG). Over 157 to 162 (GSVTNL) the chain is Cytoplasmic. The chain crosses the membrane as a helical span at residues 163–182 (TLFSFGLMVFSSIIAAWADI). Residues 183–198 (KHAIESSGDATSKVST) are Lumenal-facing. A helical transmembrane segment spans residues 199 to 219 (LNAGYIWMLINCLCTSSYVLG). Topologically, residues 220-233 (MRKRIKLTNFKDFD) are cytoplasmic. The helical transmembrane segment at 234–254 (TMFYNNLLSIPVLIVCSGILE) threads the bilayer. Residues 255–272 (DWSPANVARNFPSADRNG) lie on the Lumenal side of the membrane. Residues 273-293 (IMFAMILSGLSTVFISYTSAW) form a helical membrane-spanning segment. The Cytoplasmic portion of the chain corresponds to 294-301 (CVRVTSST). The chain crosses the membrane as a helical span at residues 302-322 (TYSMVGALNKLPIALSGLIFF). The Lumenal segment spans residues 323 to 325 (DAP). A helical transmembrane segment spans residues 326–346 (VTFPSVSAIMVGFVSGIVYAV). At 347–379 (AKIKQNAKPKVGILPTTNPVSASSQSMRDSLRS) the chain is on the cytoplasmic side.

It belongs to the TPT transporter family. SLC35D subfamily. Homooligomer.

The protein localises to the golgi apparatus membrane. Its subcellular location is the cytoplasmic vesicle membrane. It is found in the endoplasmic reticulum membrane. Functionally, involved in the import of GDP-mannose from the cytoplasm into the Golgi lumen. This Emericella nidulans (strain FGSC A4 / ATCC 38163 / CBS 112.46 / NRRL 194 / M139) (Aspergillus nidulans) protein is GDP-mannose transporter 1 (gmt1).